Reading from the N-terminus, the 691-residue chain is Elongation factor G (691 aa).

The tr-type G domain occupies 6 to 281 (SKYRNIGIMA…GVVDFLPSPI (276 aa)). GTP is bound by residues 15–22 (AHIDAGKT), 79–83 (DTPGH), and 133–136 (NKMD).

It belongs to the TRAFAC class translation factor GTPase superfamily. Classic translation factor GTPase family. EF-G/EF-2 subfamily.

The protein resides in the cytoplasm. Catalyzes the GTP-dependent ribosomal translocation step during translation elongation. During this step, the ribosome changes from the pre-translocational (PRE) to the post-translocational (POST) state as the newly formed A-site-bound peptidyl-tRNA and P-site-bound deacylated tRNA move to the P and E sites, respectively. Catalyzes the coordinated movement of the two tRNA molecules, the mRNA and conformational changes in the ribosome. The protein is Elongation factor G of Wolbachia pipientis wMel.